Consider the following 405-residue polypeptide: L-carnitine CoA-transferase (405 aa).

Lys-97 and Arg-104 together coordinate CoA. The active-site Nucleophile is Asp-169.

Belongs to the CoA-transferase III family. CaiB subfamily. In terms of assembly, homodimer.

It is found in the cytoplasm. It catalyses the reaction crotonobetainyl-CoA + (R)-carnitine = crotonobetaine + (R)-carnitinyl-CoA. The catalysed reaction is 4-(trimethylamino)butanoyl-CoA + (R)-carnitine = (R)-carnitinyl-CoA + 4-(trimethylamino)butanoate. Its pathway is amine and polyamine metabolism; carnitine metabolism. Catalyzes the reversible transfer of the CoA moiety from gamma-butyrobetainyl-CoA to L-carnitine to generate L-carnitinyl-CoA and gamma-butyrobetaine. Is also able to catalyze the reversible transfer of the CoA moiety from gamma-butyrobetainyl-CoA or L-carnitinyl-CoA to crotonobetaine to generate crotonobetainyl-CoA. This is L-carnitine CoA-transferase from Salmonella choleraesuis (strain SC-B67).